The chain runs to 495 residues: Ankyrin repeat domain-containing protein 34A (495 aa).

4 ANK repeats span residues 4-33 (TEGH…YVNE), 37-72 (QGET…DPNI), 76-106 (LGRT…DPSV), and 110-139 (AGAS…AKGT). Position 15 is an N5-methylglutamine (Gln-15). Polar residues-rich tracts occupy residues 147-162 (DTSP…YLNS) and 180-191 (VCTSPSEVQLQT). Residues 147 to 495 (DTSPSGTKKT…SLGGPGEPGR (349 aa)) form a disordered region. The segment covering 203-213 (AQEEEEKRDVF) has biased composition (basic and acidic residues). Residues 223–232 (DPSPSEPLPK) are compositionally biased toward pro residues. Basic residues predominate over residues 233-242 (PPRHPPKPLK). Thr-315 is subject to Phosphothreonine. Polar residues predominate over residues 375–385 (SVSSPRQSQES). Over residues 462 to 472 (RTKRKLVRRHS) the composition is skewed to basic residues. Over residues 485 to 495 (QSLGGPGEPGR) the composition is skewed to gly residues.

Belongs to the ANKRD34 family. In terms of processing, methylated at Gln-15 by N6AMT1.

This chain is Ankyrin repeat domain-containing protein 34A (Ankrd34a), found in Rattus norvegicus (Rat).